The sequence spans 641 residues: MGQPPLTWMLMVVVASWFITTAATNTSEARWCSECHSNATCTEDEAVTTCTCQEGFTGDGLTCVDLDECAIPGAHNCSANSSCVNTPGSFSCVCPEGFRLSPGLGCTDVDECAEPGLSHCHALATCVNVVGNYLCVCPAGYRGDGWHCECSPGSCGPGLDCVPEGDALVCADPCQAHRTLDEYWRSTEYGEGYACDTDLRGWYRFVGQGGARLAETCVPVLRCNTAAPMWLNGTHPSSDEGIVSRKACAHWSGHCCLWDASVQVKACAGGYYVYNLTAPPECHLAYCTDPSSVEGTCEECSIDEDCKSDNGRWHCQCKQDFNITDISLLEHRLECGANDMKVSLGKCQLKSLGFDKVFMYLSDSRCSGFNDRDNRDWVSVVTPARDGPCGTVLTRNETHATYSNTLYLADEIIIRDRNIKINFACSYPLDMKVSLKTSLQPVVSALNITVGGTGMFTVRMALFQNPSYTQPYQGSSVTLSTEAFLYVGTMLDGGDLSRFALLMTNCYATPSGNATDPLKYFIIQDRCPHTRDSTIQVVENGESSQGRFSVQMFRFAGNYDLVYLHCEVYLCDTMNEKCKPTCSGTRFRSGSVIDQSRVLNLGPITRKGVQATVSRAAFSSLGLLKVWLPLLLSATLTLTFQ.

The N-terminal stretch at Met1 to Thr24 is a signal peptide. N-linked (GlcNAc...) asparagine glycosylation occurs at Asn25. The region spanning Glu28–Val64 is the EGF-like 1 domain. 21 cysteine pairs are disulfide-bonded: Cys32-Cys41, Cys35-Cys50, Cys52-Cys63, Cys69-Cys83, Cys77-Cys92, Cys94-Cys106, Cys112-Cys126, Cys120-Cys135, Cys137-Cys148, Cys150-Cys161, Cys155-Cys170, Cys174-Cys267, Cys195-Cys282, Cys217-Cys255, Cys223-Cys287, Cys248-Cys256, Cys297-Cys306, Cys300-Cys315, Cys317-Cys347, Cys335-Cys425, and Cys366-Cys389. The EGF-like 2; calcium-binding domain maps to Asp65–Thr107. A glycan (N-linked (GlcNAc...) asparagine) is linked at Asn76. An EGF-like 3; calcium-binding domain is found at Asp108 to Glu149. A beta hairpin region spans residues Cys150–Ala171. The interval Asp172 to Ser291 is D10C. The N-linked (GlcNAc...) asparagine glycan is linked to Asn232. Residue Asn275 is glycosylated (N-linked (GlcNAc...) asparagine). Residues Ser292–Ile323 form the EGF-like 4 domain. The N-linked (GlcNAc...) asparagine glycan is linked to Asn322. The tract at residues Glu334–Leu429 is ZP-N. The ZP domain maps to Glu334 to Ser589. The flexible ZP-N/ZP-C linker; important for secretion and polymerization into filaments stretch occupies residues Asp430–Thr453. Residue Asn447 is glycosylated (N-linked (GlcNAc...) asparagine). Residues Gly454–Gln464 form an internal hydrophobic patch (IHP) region. The tract at residues Gly454–Ser589 is ZP-C. 3 disulfides stabilise this stretch: Cys506–Cys566, Cys527–Cys582, and Cys571–Cys578. An essential for cleavage by HPN region spans residues Arg586–Ser589. The interval Val598–Arg606 is external hydrophobic patch (EHP); regulates polymerization into filaments. Ser614 is lipidated: GPI-anchor amidated serine. Residues Arg615 to Gln641 constitute a propeptide, removed in mature form.

As to quaternary structure, homodimer that then polymerizes into long filaments. The filaments can additionally assemble laterally to form a sheet. The filaments consist of a zigzag-shaped backbone with laterally protruding arms which interact with bacterial adhesin fimH. Two fimH molecules can bind to a single UMOD monomer. In terms of processing, N-glycosylated. Post-translationally, proteolytically cleaved at a conserved C-terminal proteolytic cleavage site to generate the secreted form found in urine. This cleavage is catalyzed by HPN.

Its subcellular location is the apical cell membrane. The protein localises to the basolateral cell membrane. It localises to the cell projection. It is found in the cilium membrane. The protein resides in the secreted. Its function is as follows. Functions in biogenesis and organization of the apical membrane of epithelial cells of the thick ascending limb of Henle's loop (TALH), where it promotes formation of complex filamentous gel-like structure that may play a role in the water barrier permeability. May serve as a receptor for binding and endocytosis of cytokines (IL-1, IL-2) and TNF. Facilitates neutrophil migration across renal epithelia. In the urine, may contribute to colloid osmotic pressure, retards passage of positively charged electrolytes, and inhibits formation of liquid containing supersaturated salts and subsequent formation of salt crystals. Protects against urinary tract infections by binding to type 1 fimbriated E.coli. Binds to bacterial adhesin fimH which mediates the stable formation of bacterial aggregates, prevents the binding of E.coli to uroplakins UPK1A and UPK1B which act as urothelial receptors for type I fimbriae, and allows for pathogen clearance through micturation. Also promotes aggregation of other bacteria including K.pneumoniae, P.aeruginosa and S.mitis and so may also protect against other uropathogens. The sequence is that of Uromodulin (UMOD) from Pongo abelii (Sumatran orangutan).